Reading from the N-terminus, the 254-residue chain is uncharacterized protein (254 aa).

5 helical membrane-spanning segments follow: residues 33–53, 70–90, 92–112, 133–153, and 223–243; these read MLWVGVFIHLLYNKSLLLFFI, FNKLVYIGVFLFLLSFILFKS, FALSFLVFYLIGIFLYYLNFM, FIIFLNAILFVIPYCIFILLI, and FLVFICLSYILYIVSPFPLIF.

It to M.jannaschii MJ0902.

It localises to the cell membrane. This is an uncharacterized protein from Methanocaldococcus jannaschii (strain ATCC 43067 / DSM 2661 / JAL-1 / JCM 10045 / NBRC 100440) (Methanococcus jannaschii).